A 195-amino-acid chain; its full sequence is Anthranilate synthase component 2 (195 aa).

In terms of domain architecture, Glutamine amidotransferase type-1 spans 1–195 (MILIIDNYDS…LKNFLSLSYG (195 aa)). 52-54 (GPG) is a binding site for L-glutamine. Cysteine 79 (nucleophile; for GATase activity) is an active-site residue. L-glutamine contacts are provided by residues glutamine 83 and 129–130 (SL). Residues histidine 173 and glutamate 175 contribute to the active site.

Tetramer of two components I and two components II.

The protein localises to the plastid. Its subcellular location is the chloroplast. It catalyses the reaction chorismate + L-glutamine = anthranilate + pyruvate + L-glutamate + H(+). Its pathway is amino-acid biosynthesis; L-tryptophan biosynthesis; L-tryptophan from chorismate: step 1/5. This is Anthranilate synthase component 2 (trpG) from Cyanidium caldarium (Red alga).